Consider the following 89-residue polypeptide: MSITAERKAALIKEYATAEGDTGSPEVQVAILTERINNLTEHFKDHKKDNHSRRGLLTMVSSRRSLLDYLKKKDEGRYSKLINSLGIRR.

It belongs to the universal ribosomal protein uS15 family. In terms of assembly, part of the 30S ribosomal subunit. Forms a bridge to the 50S subunit in the 70S ribosome, contacting the 23S rRNA.

Its function is as follows. One of the primary rRNA binding proteins, it binds directly to 16S rRNA where it helps nucleate assembly of the platform of the 30S subunit by binding and bridging several RNA helices of the 16S rRNA. In terms of biological role, forms an intersubunit bridge (bridge B4) with the 23S rRNA of the 50S subunit in the ribosome. This Rhizobium etli (strain CIAT 652) protein is Small ribosomal subunit protein uS15.